A 151-amino-acid chain; its full sequence is UPF0178 protein Desal_2673 (151 aa).

The protein belongs to the UPF0178 family.

This Maridesulfovibrio salexigens (strain ATCC 14822 / DSM 2638 / NCIMB 8403 / VKM B-1763) (Desulfovibrio salexigens) protein is UPF0178 protein Desal_2673.